A 340-amino-acid chain; its full sequence is Phenylalanine--tRNA ligase alpha subunit (340 aa).

Glu255 lines the Mg(2+) pocket.

The protein belongs to the class-II aminoacyl-tRNA synthetase family. Phe-tRNA synthetase alpha subunit type 1 subfamily. In terms of assembly, tetramer of two alpha and two beta subunits. It depends on Mg(2+) as a cofactor.

The protein resides in the cytoplasm. It catalyses the reaction tRNA(Phe) + L-phenylalanine + ATP = L-phenylalanyl-tRNA(Phe) + AMP + diphosphate + H(+). The chain is Phenylalanine--tRNA ligase alpha subunit from Heliobacterium modesticaldum (strain ATCC 51547 / Ice1).